The sequence spans 410 residues: Regulator of microtubule dynamics protein 2 (410 aa).

A helical membrane pass occupies residues 10 to 27; the sequence is ILGIVVGTAGISLLLLWY. The stretch at 71-109 forms a coiled coil; it reads RQLQILEKLNELLTHMEELKEEIRVLKEAIPKLEEYIQG. Serine 121 bears the Phosphoserine mark. Residues 122–131 show a composition bias toward basic residues; it reads PQHRARKRRL. The interval 122–153 is disordered; the sequence is PQHRARKRRLATVQSSATSNSSEEAESEGGYV. Threonine 139 is subject to Phosphothreonine. Position 152 is a phosphotyrosine (tyrosine 152). Phosphothreonine occurs at positions 154 and 157.

The protein belongs to the RMDN family. Interacts with microtubules.

It localises to the membrane. The protein resides in the cytoplasm. The protein localises to the cytoskeleton. Its subcellular location is the spindle. It is found in the spindle pole. This chain is Regulator of microtubule dynamics protein 2 (RMDN2), found in Bos taurus (Bovine).